Here is a 206-residue protein sequence, read N- to C-terminus: Ribosomal RNA small subunit methyltransferase G (206 aa).

S-adenosyl-L-methionine is bound by residues Gly71, Phe76, 122–123 (AE), and Arg135.

It belongs to the methyltransferase superfamily. RNA methyltransferase RsmG family.

Its subcellular location is the cytoplasm. Its function is as follows. Specifically methylates the N7 position of a guanine in 16S rRNA. This Bacteroides fragilis (strain ATCC 25285 / DSM 2151 / CCUG 4856 / JCM 11019 / LMG 10263 / NCTC 9343 / Onslow / VPI 2553 / EN-2) protein is Ribosomal RNA small subunit methyltransferase G.